Consider the following 145-residue polypeptide: ATP synthase epsilon chain (145 aa).

Residues 93–104 (AEAEKARARAQE) show a composition bias toward basic and acidic residues. A disordered region spans residues 93-113 (AEAEKARARAQEALKNPDASK).

The protein belongs to the ATPase epsilon chain family. As to quaternary structure, F-type ATPases have 2 components, CF(1) - the catalytic core - and CF(0) - the membrane proton channel. CF(1) has five subunits: alpha(3), beta(3), gamma(1), delta(1), epsilon(1). CF(0) has three main subunits: a, b and c.

The protein resides in the cell inner membrane. Produces ATP from ADP in the presence of a proton gradient across the membrane. The chain is ATP synthase epsilon chain from Francisella philomiragia subsp. philomiragia (strain ATCC 25017 / CCUG 19701 / FSC 153 / O#319-036).